Here is a 1026-residue protein sequence, read N- to C-terminus: Multidrug resistance protein MdtC (1026 aa).

A run of 12 helical transmembrane segments spans residues 12 to 32 (VATL…FRLL), 333 to 353 (EVEQ…FLFL), 360 to 380 (AIPA…MYLC), 387 to 407 (LSLM…IVVL), 431 to 451 (VGFT…PLLL), 463 to 483 (FAVT…TLTP), 528 to 548 (WVLL…ISIP), 853 to 873 (LLLI…LYES), 875 to 895 (VHPL…LLAL), 897 to 917 (WFGA…IGIV), 953 to 973 (PIMM…LTSG), and 984 to 1004 (ITIV…TPVV).

The protein belongs to the resistance-nodulation-cell division (RND) (TC 2.A.6) family. MdtC subfamily. In terms of assembly, part of a tripartite efflux system composed of MdtA, MdtB and MdtC. MdtC forms a heteromultimer with MdtB.

The protein resides in the cell inner membrane. This Pectobacterium carotovorum subsp. carotovorum (strain PC1) protein is Multidrug resistance protein MdtC.